The sequence spans 413 residues: Phosphopentomutase (413 aa).

Residues D11, D306, H311, D347, H348, and H359 each contribute to the Mn(2+) site.

The protein belongs to the phosphopentomutase family. Mn(2+) serves as cofactor.

The protein localises to the cytoplasm. The catalysed reaction is 2-deoxy-alpha-D-ribose 1-phosphate = 2-deoxy-D-ribose 5-phosphate. It catalyses the reaction alpha-D-ribose 1-phosphate = D-ribose 5-phosphate. The protein operates within carbohydrate degradation; 2-deoxy-D-ribose 1-phosphate degradation; D-glyceraldehyde 3-phosphate and acetaldehyde from 2-deoxy-alpha-D-ribose 1-phosphate: step 1/2. Its function is as follows. Isomerase that catalyzes the conversion of deoxy-ribose 1-phosphate (dRib-1-P) and ribose 1-phosphate (Rib-1-P) to deoxy-ribose 5-phosphate (dRib-5-P) and ribose 5-phosphate (Rib-5-P), respectively. The polypeptide is Phosphopentomutase (Helicobacter acinonychis (strain Sheeba)).